Reading from the N-terminus, the 158-residue chain is Phospholipase A2 AP-PLA2-II (158 aa).

An N-terminal signal peptide occupies residues 1 to 16; the sequence is MKTFLILAMAVALAKA. The propeptide occupies 17 to 23; it reads QSTDEIT. Disulfide bonds link cysteine 51-cysteine 158, cysteine 53-cysteine 69, cysteine 68-cysteine 138, cysteine 75-cysteine 131, cysteine 85-cysteine 124, and cysteine 109-cysteine 129. Residues glycine 54 and glycine 56 each contribute to the Ca(2+) site. The active site involves histidine 72. Aspartate 73 is a binding site for Ca(2+). The active site involves aspartate 132.

The protein belongs to the phospholipase A2 family. Group I subfamily. In terms of assembly, monomer. The cofactor is Ca(2+). In terms of tissue distribution, expressed by the venom gland.

The protein localises to the secreted. It catalyses the reaction a 1,2-diacyl-sn-glycero-3-phosphocholine + H2O = a 1-acyl-sn-glycero-3-phosphocholine + a fatty acid + H(+). In terms of biological role, starfish phospholipase A2 (PLA2) that has hemorrhagic and capillary permeability-increasing activities and hence is considered to be deeply involved in the local inflammation. Shows hemolytic activity only in the presence of phosphatidylcholine (PC). PLA2 catalyzes the calcium-dependent hydrolysis of the 2-acyl groups in 3-sn-phosphoglycerides. The chain is Phospholipase A2 AP-PLA2-II from Acanthaster planci (Crown-of-thorns starfish).